The sequence spans 310 residues: MNGSNLRRGTFTILLALCATPWVGTAQALVMGIALGLLQANPWPRQTARYSKMLLQASVVGLGFGLSLGEVIQTGKDSIWYSVIGISCTLLVGYGLGKLFKTGTNTSALISFGTAICGGSAIAAMAPVLKAKSDETAVALATVFTLNSAALLLFPLVGHWLQLDQNTFGVWSGLAIHDTSSVVGATSAYGATALAIGTTVKLTRAIWIAPVVMAASLIKGGEQQARIPLFIIGFLGAAAIRTLLPSYEHFWGELAGVAKQCLVVTLFLVGAGLSREVVKQVGIRPLVQAVSLWVLVSALTLVALKLPWSA.

Transmembrane regions (helical) follow at residues 11-33, 53-72, 79-97, 107-129, 136-158, 193-215, 227-244, 254-273, and 286-308; these read FTILLALCATPWVGTAQALVMGI, MLLQASVVGLGFGLSLGEVI, IWYSVIGISCTLLVGYGLG, SALISFGTAICGGSAIAAMAPVL, TAVALATVFTLNSAALLLFPLVG, ALAIGTTVKLTRAIWIAPVVMAA, IPLFIIGFLGAAAIRTLL, LAGVAKQCLVVTLFLVGAGL, and LVQAVSLWVLVSALTLVALKLPW.

This sequence belongs to the UPF0324 family.

It is found in the cell membrane. This chain is UPF0324 membrane protein GSU2818, found in Geobacter sulfurreducens (strain ATCC 51573 / DSM 12127 / PCA).